Consider the following 531-residue polypeptide: Serine-type carboxypeptidase F (531 aa).

Positions 1 to 25 (MLFRSLLSTAVLAVSLCTDNASAAK) are cleaved as a signal peptide. Asparagine 20 is a glycosylation site (N-linked (GlcNAc...) asparagine). Residues 26–52 (HGRFGQKARDAMNIAKRSANAVKHSLK) constitute a propeptide that is removed on maturation. N-linked (GlcNAc...) asparagine glycans are attached at residues asparagine 63, asparagine 94, and asparagine 155. Serine 211 is a catalytic residue. Asparagine 228, asparagine 271, asparagine 309, and asparagine 378 each carry an N-linked (GlcNAc...) asparagine glycan. Aspartate 430 is a catalytic residue. 2 N-linked (GlcNAc...) asparagine glycosylation sites follow: asparagine 436 and asparagine 444. Residue histidine 507 is part of the active site.

The protein belongs to the peptidase S10 family. In terms of assembly, monomer.

With respect to regulation, inhibited by DFP, and Hg(Cl)2. Removes any amino acid from the C-terminus of a long peptide. Digests preferentially peptides containing a positively charged residue in P1' position, as well as arginine, lysine or phenylalanine in P1 position of ester substrate. Also catalyzes peptide synthesis. This is Serine-type carboxypeptidase F (pepF) from Aspergillus niger.